The following is a 68-amino-acid chain: Antimicrobial peptide Eval655 (68 aa).

A signal peptide spans methionine 1–alanine 23. Position 36 is a leucine amide (leucine 36). Positions glycine 37 to arginine 68 are excised as a propeptide.

It belongs to the non-disulfide-bridged peptide (NDBP) superfamily. Short antimicrobial peptide (group 4) family. Expressed by the venom gland.

Its subcellular location is the secreted. Functionally, probable antimicrobial peptide. Shows low inhibitory activity against herpes simplex virus type 1 (HSV-1). The sequence is that of Antimicrobial peptide Eval655 from Euscorpiops validus (Scorpion).